A 101-amino-acid chain; its full sequence is NAD(P)H-quinone oxidoreductase subunit 4L, chloroplastic (101 aa).

3 consecutive transmembrane segments (helical) span residues 2-22 (YIEN…YGLL), 32-52 (MCLE…SNFI), and 61-81 (VIAI…LALV).

The protein belongs to the complex I subunit 4L family. In terms of assembly, NDH is composed of at least 16 different subunits, 5 of which are encoded in the nucleus.

The protein localises to the plastid. Its subcellular location is the chloroplast thylakoid membrane. The catalysed reaction is a plastoquinone + NADH + (n+1) H(+)(in) = a plastoquinol + NAD(+) + n H(+)(out). It carries out the reaction a plastoquinone + NADPH + (n+1) H(+)(in) = a plastoquinol + NADP(+) + n H(+)(out). Its function is as follows. NDH shuttles electrons from NAD(P)H:plastoquinone, via FMN and iron-sulfur (Fe-S) centers, to quinones in the photosynthetic chain and possibly in a chloroplast respiratory chain. The immediate electron acceptor for the enzyme in this species is believed to be plastoquinone. Couples the redox reaction to proton translocation, and thus conserves the redox energy in a proton gradient. In Mesostigma viride (Green alga), this protein is NAD(P)H-quinone oxidoreductase subunit 4L, chloroplastic.